Reading from the N-terminus, the 295-residue chain is Probable aspartoacylase (295 aa).

2 residues coordinate Zn(2+): His-13 and Glu-16. Substrate is bound by residues Arg-54 and 61–62 (NR). His-100 contacts Zn(2+). The substrate site is built by Glu-158 and Tyr-268.

The protein belongs to the AspA/AstE family. Aspartoacylase subfamily. It depends on Zn(2+) as a cofactor.

The enzyme catalyses an N-acyl-L-aspartate + H2O = a carboxylate + L-aspartate. The sequence is that of Probable aspartoacylase from Prochlorococcus marinus subsp. pastoris (strain CCMP1986 / NIES-2087 / MED4).